Reading from the N-terminus, the 242-residue chain is Purine nucleoside phosphorylase PA4543 (242 aa).

Zn(2+) is bound by residues histidine 69, cysteine 103, and histidine 120.

Belongs to the purine nucleoside phosphorylase YfiH/LACC1 family. In terms of assembly, homodimer. Requires Cu(2+) as cofactor. The cofactor is Zn(2+).

It carries out the reaction adenosine + phosphate = alpha-D-ribose 1-phosphate + adenine. It catalyses the reaction S-methyl-5'-thioadenosine + phosphate = 5-(methylsulfanyl)-alpha-D-ribose 1-phosphate + adenine. The enzyme catalyses inosine + phosphate = alpha-D-ribose 1-phosphate + hypoxanthine. The catalysed reaction is adenosine + H2O + H(+) = inosine + NH4(+). In terms of biological role, purine nucleoside enzyme that catalyzes the phosphorolysis of adenosine and inosine nucleosides, yielding D-ribose 1-phosphate and the respective free bases, adenine and hypoxanthine. Also catalyzes the phosphorolysis of S-methyl-5'-thioadenosine into adenine and S-methyl-5-thio-alpha-D-ribose 1-phosphate. Also has adenosine deaminase activity. The polypeptide is Purine nucleoside phosphorylase PA4543 (Pseudomonas aeruginosa (strain ATCC 15692 / DSM 22644 / CIP 104116 / JCM 14847 / LMG 12228 / 1C / PRS 101 / PAO1)).